The following is a 234-amino-acid chain: Alpha N-terminal protein methyltransferase 1 (234 aa).

S-adenosyl-L-methionine-binding positions include glycine 71, arginine 76, 93 to 95, 120 to 121, and glutamine 136; these read DVV and LQ.

The protein belongs to the methyltransferase superfamily. NTM1 family. Expressed in uterine cells and PVT neurons of the tail. Expressed in pharynx, intestine and DVB tail neuron.

It carries out the reaction N-terminal L-alanyl-L-prolyl-L-lysyl-[protein] + 3 S-adenosyl-L-methionine = N-terminal N,N,N-trimethyl-L-alanyl-L-prolyl-L-lysyl-[protein] + 3 S-adenosyl-L-homocysteine + 3 H(+). It catalyses the reaction N-terminal L-seryl-L-prolyl-L-lysyl-[protein] + 3 S-adenosyl-L-methionine = N-terminal N,N,N-trimethyl-L-seryl-L-prolyl-L-lysyl-[protein] + 3 S-adenosyl-L-homocysteine + 3 H(+). The catalysed reaction is N-terminal L-prolyl-L-prolyl-L-lysyl-[protein] + 2 S-adenosyl-L-methionine = N-terminal N,N-dimethyl-L-prolyl-L-prolyl-L-lysyl-[protein] + 2 S-adenosyl-L-homocysteine + 2 H(+). Functionally, alpha-N-methyltransferase that methylates the N-terminus of target proteins containing the N-terminal motif [Ala/Pro/Ser]-Pro-Lys when the initiator Met is cleaved. Specifically catalyzes mono-, di- or tri-methylation of exposed alpha-amino group of Ala or Ser residue in the [Ala/Ser]-Pro-Lys motif and mono- or di-methylation of Pro in the Pro-Pro-Lys motif. Probably required for the synthesis of neurotransmitter melatonin from serotonin, which plays a role in promoting a sleep-like state, called lethargus, during larval development. This chain is Alpha N-terminal protein methyltransferase 1, found in Caenorhabditis elegans.